A 416-amino-acid chain; its full sequence is Succinate--CoA ligase [ADP-forming] subunit beta (416 aa).

The transit peptide at 1-14 directs the protein to the hydrogenosome; sequence MLRMAPKTVGAVRN. Residues Lys-64, 71–73, and Glu-132 each bind ATP; that span reads GRG. 2 residues coordinate Mg(2+): Asn-224 and Asp-242. Substrate-binding positions include Asn-293 and 350–352; that span reads GIM.

It belongs to the succinate/malate CoA ligase beta subunit family. Heterodimer of an alpha and a beta subunit. Mg(2+) serves as cofactor.

The protein resides in the hydrogenosome. The enzyme catalyses succinate + ATP + CoA = succinyl-CoA + ADP + phosphate. The protein operates within carbohydrate metabolism; tricarboxylic acid cycle; succinate from succinyl-CoA (ligase route): step 1/1. Succinyl-CoA synthetase functions in the citric acid cycle (TCA), coupling the hydrolysis of succinyl-CoA to the synthesis of ATP and thus represents the only step of substrate-level phosphorylation in the TCA. The beta subunit provides nucleotide specificity of the enzyme and binds the substrate succinate, while the binding sites for coenzyme A and phosphate are found in the alpha subunit. This chain is Succinate--CoA ligase [ADP-forming] subunit beta (SCSb), found in Blastocystis sp. subtype 1 (strain ATCC 50177 / NandII).